The sequence spans 159 residues: Putative viral CXC chemokine 2 (159 aa).

Disulfide bonds link cysteine 50-cysteine 77 and cysteine 52-cysteine 93.

It belongs to the intercrine alpha (chemokine CxC) family.

This chain is Putative viral CXC chemokine 2 (UL147), found in Human cytomegalovirus (strain Towne) (HHV-5).